The primary structure comprises 471 residues: Siroheme synthase 1 (471 aa).

Residues M1–L203 are precorrin-2 dehydrogenase /sirohydrochlorin ferrochelatase. NAD(+)-binding positions include E22–I23 and E43–T44. Residue S128 is modified to Phosphoserine. The interval G215–A471 is uroporphyrinogen-III C-methyltransferase. P224 provides a ligand contact to S-adenosyl-L-methionine. The Proton acceptor role is filled by D247. The active-site Proton donor is K269. S-adenosyl-L-methionine contacts are provided by residues G300 to D302, I305, T330 to A331, M382, and G411.

The protein in the N-terminal section; belongs to the precorrin-2 dehydrogenase / sirohydrochlorin ferrochelatase family. In the C-terminal section; belongs to the precorrin methyltransferase family.

It carries out the reaction uroporphyrinogen III + 2 S-adenosyl-L-methionine = precorrin-2 + 2 S-adenosyl-L-homocysteine + H(+). The enzyme catalyses precorrin-2 + NAD(+) = sirohydrochlorin + NADH + 2 H(+). It catalyses the reaction siroheme + 2 H(+) = sirohydrochlorin + Fe(2+). The protein operates within cofactor biosynthesis; adenosylcobalamin biosynthesis; precorrin-2 from uroporphyrinogen III: step 1/1. It functions in the pathway cofactor biosynthesis; adenosylcobalamin biosynthesis; sirohydrochlorin from precorrin-2: step 1/1. Its pathway is porphyrin-containing compound metabolism; siroheme biosynthesis; precorrin-2 from uroporphyrinogen III: step 1/1. It participates in porphyrin-containing compound metabolism; siroheme biosynthesis; siroheme from sirohydrochlorin: step 1/1. The protein operates within porphyrin-containing compound metabolism; siroheme biosynthesis; sirohydrochlorin from precorrin-2: step 1/1. Multifunctional enzyme that catalyzes the SAM-dependent methylations of uroporphyrinogen III at position C-2 and C-7 to form precorrin-2 via precorrin-1. Then it catalyzes the NAD-dependent ring dehydrogenation of precorrin-2 to yield sirohydrochlorin. Finally, it catalyzes the ferrochelation of sirohydrochlorin to yield siroheme. The chain is Siroheme synthase 1 from Klebsiella pneumoniae subsp. pneumoniae (strain ATCC 700721 / MGH 78578).